The following is a 279-amino-acid chain: ATP synthase gamma chain (279 aa).

It belongs to the ATPase gamma chain family. As to quaternary structure, F-type ATPases have 2 components, CF(1) - the catalytic core - and CF(0) - the membrane proton channel. CF(1) has five subunits: alpha(3), beta(3), gamma(1), delta(1), epsilon(1). CF(0) has three main subunits: a, b and c.

It localises to the cell membrane. In terms of biological role, produces ATP from ADP in the presence of a proton gradient across the membrane. The gamma chain is believed to be important in regulating ATPase activity and the flow of protons through the CF(0) complex. This chain is ATP synthase gamma chain, found in Mycoplasma genitalium (strain ATCC 33530 / DSM 19775 / NCTC 10195 / G37) (Mycoplasmoides genitalium).